The following is a 182-amino-acid chain: Large ribosomal subunit protein bL25 (182 aa).

It belongs to the bacterial ribosomal protein bL25 family. CTC subfamily. In terms of assembly, part of the 50S ribosomal subunit; part of the 5S rRNA/L5/L18/L25 subcomplex. Contacts the 5S rRNA. Binds to the 5S rRNA independently of L5 and L18.

In terms of biological role, this is one of the proteins that binds to the 5S RNA in the ribosome where it forms part of the central protuberance. The chain is Large ribosomal subunit protein bL25 from Borrelia duttonii (strain Ly).